The following is a 387-amino-acid chain: Deoxyguanosinetriphosphate triphosphohydrolase-like protein (387 aa).

The tract at residues 1-26 is disordered; the sequence is MTAPYASDPQRARGRRVKEEESTFRS. Residues 17 to 26 are compositionally biased toward basic and acidic residues; that stretch reads VKEEESTFRS. One can recognise an HD domain in the interval 62–198; sequence RLTHSIEVAQ…AAIADDVAYN (137 aa).

Belongs to the dGTPase family. Type 2 subfamily.

This chain is Deoxyguanosinetriphosphate triphosphohydrolase-like protein, found in Roseobacter denitrificans (strain ATCC 33942 / OCh 114) (Erythrobacter sp. (strain OCh 114)).